The primary structure comprises 139 residues: D-ribose pyranase (139 aa).

The active-site Proton donor is the His20. Substrate is bound by residues Asp28, His106, and 128-130; that span reads FAN.

Belongs to the RbsD / FucU family. RbsD subfamily. Homodecamer.

It is found in the cytoplasm. The catalysed reaction is beta-D-ribopyranose = beta-D-ribofuranose. It functions in the pathway carbohydrate metabolism; D-ribose degradation; D-ribose 5-phosphate from beta-D-ribopyranose: step 1/2. In terms of biological role, catalyzes the interconversion of beta-pyran and beta-furan forms of D-ribose. The protein is D-ribose pyranase of Yersinia pseudotuberculosis serotype O:1b (strain IP 31758).